A 389-amino-acid polypeptide reads, in one-letter code: Formate-dependent phosphoribosylglycinamide formyltransferase (389 aa).

N(1)-(5-phospho-beta-D-ribosyl)glycinamide contacts are provided by residues 12–13 (EL) and Glu-72. Residues Arg-104, Lys-145, 150-155 (SSGKGQ), 185-188 (EAFV), and Glu-193 contribute to the ATP site. The 192-residue stretch at 109-300 (DLASKELGLR…EFELHARAVL (192 aa)) folds into the ATP-grasp domain. Mg(2+) is bound by residues Glu-258 and Glu-270. N(1)-(5-phospho-beta-D-ribosyl)glycinamide-binding positions include Asp-277, Lys-348, and 355-356 (RR).

The protein belongs to the PurK/PurT family. Homodimer.

It catalyses the reaction N(1)-(5-phospho-beta-D-ribosyl)glycinamide + formate + ATP = N(2)-formyl-N(1)-(5-phospho-beta-D-ribosyl)glycinamide + ADP + phosphate + H(+). Its pathway is purine metabolism; IMP biosynthesis via de novo pathway; N(2)-formyl-N(1)-(5-phospho-D-ribosyl)glycinamide from N(1)-(5-phospho-D-ribosyl)glycinamide (formate route): step 1/1. Functionally, involved in the de novo purine biosynthesis. Catalyzes the transfer of formate to 5-phospho-ribosyl-glycinamide (GAR), producing 5-phospho-ribosyl-N-formylglycinamide (FGAR). Formate is provided by PurU via hydrolysis of 10-formyl-tetrahydrofolate. In Chlorobium phaeobacteroides (strain DSM 266 / SMG 266 / 2430), this protein is Formate-dependent phosphoribosylglycinamide formyltransferase.